A 127-amino-acid polypeptide reads, in one-letter code: Small ribosomal subunit protein uS11 (127 aa).

Belongs to the universal ribosomal protein uS11 family. In terms of assembly, part of the 30S ribosomal subunit. Interacts with proteins S7 and S18. Binds to IF-3.

In terms of biological role, located on the platform of the 30S subunit, it bridges several disparate RNA helices of the 16S rRNA. Forms part of the Shine-Dalgarno cleft in the 70S ribosome. This chain is Small ribosomal subunit protein uS11, found in Anaeromyxobacter dehalogenans (strain 2CP-C).